The primary structure comprises 255 residues: Venom allergen-1 (255 aa).

An N-terminal signal peptide occupies residues 1-21 (MASHVIVKFITAAILIGSCYA). One can recognise an SCP domain in the interval 65–210 (LKKHNELRAE…VIKYYLVCNY (146 aa)). 2 N-linked (GlcNAc...) asparagine glycosylation sites follow: N146 and N209.

The protein belongs to the CRISP family. Interacts with human LRPPRC; the interaction interrupts association between BECN1 and LRPPRC. Interacts with human CD4. In terms of assembly, (Microbial infection) Interacts with Zika virus envelope protein E and Zika virus-like particles; the interaction does not affect Zika virus replication in human endothelial cells and keratinocytes. As to expression, saliva (at protein level). Female salivary gland. No or low-level expression in female hemolymph, midgut, Malpighian tubule system and ovary. No or low-level expression in male tissues.

Its subcellular location is the secreted. It localises to the host endosome. It is found in the host mitochondrion. Functionally, activates autophagy in human monocytic cells, dendritic cells and macrophages. Promotes activation of human CD4(+) T-cells. Does not affect cytokine expression in human monocytic cells. Its function is as follows. (Microbial infection) Promotes dengue virus type 2 replication in human monocytic cells, dendritic cells and macrophages. Pro-viral properties are linked to BECN1-mediated autophagy activation in the host. Does not directly interact with the purified envelope protein of dengue virus type 2. In terms of biological role, (Microbial infection) Promotes Zika virus replication in human monocytic cells, dendritic cells and macrophages. Facilitates Zika virus transmission from infected mosquitoes to the host in mouse model. Pro-viral properties are linked to BECN1-mediated autophagy activation in the host. Does not affect Zika virus replication in human endothelial cells and keratinocytes. (Microbial infection) Promotes Semliki Forest virus replication in human monocytic cells. Functionally, (Microbial infection) Does not influence Batai virus replication in human monocytic cells. This is Venom allergen-1 from Aedes aegypti (Yellowfever mosquito).